The sequence spans 544 residues: Chaperonin GroEL (544 aa).

ATP is bound by residues T29–P32, K50, D86–T90, G413, D479–A481, and D495.

Belongs to the chaperonin (HSP60) family. As to quaternary structure, forms a cylinder of 14 subunits composed of two heptameric rings stacked back-to-back. Interacts with the co-chaperonin GroES.

The protein localises to the cytoplasm. The enzyme catalyses ATP + H2O + a folded polypeptide = ADP + phosphate + an unfolded polypeptide.. Functionally, together with its co-chaperonin GroES, plays an essential role in assisting protein folding. The GroEL-GroES system forms a nano-cage that allows encapsulation of the non-native substrate proteins and provides a physical environment optimized to promote and accelerate protein folding. In Borrelia turicatae (strain 91E135), this protein is Chaperonin GroEL.